Consider the following 80-residue polypeptide: MSEQTVEQKLSAEIVTLKSRILDTQDQAARLMEESKILQGTLAEIARAVGITGDTIKVEEIVEAVKNLTAESADEAKDEE.

Homotrimer. Homohexamer.

Chaperone essential for folding and oligomerization of both long and short tail fibers. Required for the assembly of gp34, gp36 and gp37 (components of the long tail fiber) and p12 (the subunit of the short tail fiber). Together with gp38, participates in the formation of the distal part of the long fibers. This Escherichia coli (Bacteriophage T4) protein is Tail fiber assembly helper protein (57).